Here is a 242-residue protein sequence, read N- to C-terminus: Ribose-5-phosphate isomerase A (242 aa).

Residues 39-42, 95-98, and 108-111 each bind substrate; these read SGST, DGAD, and KGGG. Residue glutamate 117 is the Proton acceptor of the active site. Lysine 135 serves as a coordination point for substrate.

This sequence belongs to the ribose 5-phosphate isomerase family. As to quaternary structure, homodimer.

It catalyses the reaction aldehydo-D-ribose 5-phosphate = D-ribulose 5-phosphate. Its pathway is carbohydrate degradation; pentose phosphate pathway; D-ribose 5-phosphate from D-ribulose 5-phosphate (non-oxidative stage): step 1/1. Catalyzes the reversible conversion of ribose-5-phosphate to ribulose 5-phosphate. The chain is Ribose-5-phosphate isomerase A from Chlamydia trachomatis serovar L2 (strain ATCC VR-902B / DSM 19102 / 434/Bu).